The following is a 237-amino-acid chain: MRPSKRAADEMRAVSFERGVMRHAEGSCLVKFGDTHVLVSATLEERLPPWLKGQGRGWVTAEYSMLPRATHDRTRRESTTGKQSGRTQEIQRLIGRSLRSVTDLVALGEKQITLDCDVLQADGGTRTAAITGAWIALYDCLSWMRQRSMVKEIPLKDHVAAVSCGIYNGTPVLDLDYAEDSVAETDANFVMTGTGGIVEIQGTAEKTPFSQDELLGLLSLARSGVEKLVGLQKLAVG.

Phosphate contacts are provided by residues Arg-86 and 124-126; that span reads GTR.

This sequence belongs to the RNase PH family. In terms of assembly, homohexameric ring arranged as a trimer of dimers.

It catalyses the reaction tRNA(n+1) + phosphate = tRNA(n) + a ribonucleoside 5'-diphosphate. Phosphorolytic 3'-5' exoribonuclease that plays an important role in tRNA 3'-end maturation. Removes nucleotide residues following the 3'-CCA terminus of tRNAs; can also add nucleotides to the ends of RNA molecules by using nucleoside diphosphates as substrates, but this may not be physiologically important. Probably plays a role in initiation of 16S rRNA degradation (leading to ribosome degradation) during starvation. The chain is Ribonuclease PH from Xanthobacter autotrophicus (strain ATCC BAA-1158 / Py2).